The chain runs to 123 residues: Large ribosomal subunit protein uL18 (123 aa).

Belongs to the universal ribosomal protein uL18 family. In terms of assembly, part of the 50S ribosomal subunit; part of the 5S rRNA/L5/L18/L25 subcomplex. Contacts the 5S and 23S rRNAs.

Its function is as follows. This is one of the proteins that bind and probably mediate the attachment of the 5S RNA into the large ribosomal subunit, where it forms part of the central protuberance. This Wolbachia sp. subsp. Brugia malayi (strain TRS) protein is Large ribosomal subunit protein uL18.